Reading from the N-terminus, the 111-residue chain is Small ribosomal subunit protein uS17 (111 aa).

This sequence belongs to the universal ribosomal protein uS17 family. As to quaternary structure, part of the 30S ribosomal subunit.

Its function is as follows. One of the primary rRNA binding proteins, it binds specifically to the 5'-end of 16S ribosomal RNA. This Methanocella arvoryzae (strain DSM 22066 / NBRC 105507 / MRE50) protein is Small ribosomal subunit protein uS17.